The chain runs to 219 residues: Adenylate kinase (219 aa).

10 to 15 (GAGKGT) contributes to the ATP binding site. The interval 30–59 (STGDMLRVAVKVGTPLGIEAKKIMDSGGLV) is NMP. Residues Thr-31, Arg-36, 57–59 (GLV), 85–88 (GFPR), and Gln-92 each bind AMP. The LID stretch occupies residues 122–159 (GRRTHLKSGRTYHITYNQPKVEGIDDITGEKLVQRSDD). ATP contacts are provided by residues Arg-123 and 132–133 (TY). Residues Arg-156 and Arg-167 each coordinate AMP. An ATP-binding site is contributed by Gly-202.

This sequence belongs to the adenylate kinase family. In terms of assembly, monomer.

The protein resides in the cytoplasm. The catalysed reaction is AMP + ATP = 2 ADP. It participates in purine metabolism; AMP biosynthesis via salvage pathway; AMP from ADP: step 1/1. Its function is as follows. Catalyzes the reversible transfer of the terminal phosphate group between ATP and AMP. Plays an important role in cellular energy homeostasis and in adenine nucleotide metabolism. The chain is Adenylate kinase from Vesicomyosocius okutanii subsp. Calyptogena okutanii (strain HA).